Consider the following 260-residue polypeptide: Indole-3-glycerol phosphate synthase (260 aa).

The protein belongs to the TrpC family.

It catalyses the reaction 1-(2-carboxyphenylamino)-1-deoxy-D-ribulose 5-phosphate + H(+) = (1S,2R)-1-C-(indol-3-yl)glycerol 3-phosphate + CO2 + H2O. Its pathway is amino-acid biosynthesis; L-tryptophan biosynthesis; L-tryptophan from chorismate: step 4/5. In Staphylococcus aureus (strain MSSA476), this protein is Indole-3-glycerol phosphate synthase.